A 218-amino-acid chain; its full sequence is Guanylate kinase (218 aa).

Residues 14-193 enclose the Guanylate kinase-like domain; the sequence is GVMLVLSSPS…AFASVRAIVS (180 aa). 21-28 serves as a coordination point for ATP; it reads SPSGAGKS.

Belongs to the guanylate kinase family.

Its subcellular location is the cytoplasm. The catalysed reaction is GMP + ATP = GDP + ADP. In terms of biological role, essential for recycling GMP and indirectly, cGMP. The protein is Guanylate kinase of Chelativorans sp. (strain BNC1).